Here is a 211-residue protein sequence, read N- to C-terminus: MADDELETYRLWRIRKTVLQMVHDRGYLVAQDELDQPLETFKVQYGDRPSEKKPARSDLTILVAHNDDPADQMFVFFPEDAKIGIKTIKAICQQMQEQNISRAIIVVQTGMTPSAKQSIGDMAPKYMLEHFLEAELMVNITEHELVPEHVVMTAEEKAELLARYKLKDSQLPRIQQCDPVARYFGLRRGQVVKIIRPSETAGRYITYRLVV.

This sequence belongs to the archaeal Rpo5/eukaryotic RPB5 RNA polymerase subunit family. Component of the RNA polymerase I (Pol I), RNA polymerase II (Pol II) and RNA polymerase III (Pol III) complexes consisting of at least 13, 12 and 17 subunits, respectively. In RNA Pol II, this subunit is present in 2-fold molar excess over the other subunits.

It localises to the nucleus. In terms of biological role, DNA-dependent RNA polymerase catalyzes the transcription of DNA into RNA using the four ribonucleoside triphosphates as substrates. Common component of RNA polymerases I, II and III which synthesize ribosomal RNA precursors, mRNA precursors and many functional non-coding RNAs, and small RNAs, such as 5S rRNA and tRNAs, respectively. Pol II is the central component of the basal RNA polymerase II transcription machinery. Pols are composed of mobile elements that move relative to each other. In Pol II, RPB5 is part of the lower jaw surrounding the central large cleft and thought to grab the incoming DNA template. Seems to be the major component in this process. The chain is DNA-directed RNA polymerases I, II, and III subunit RPABC1 (rpb-5) from Caenorhabditis elegans.